Consider the following 398-residue polypeptide: 1-aminocyclopropane-1-carboxylate oxidase homolog 5 (398 aa).

In terms of domain architecture, Fe2OG dioxygenase spans 247-347 (KSHIMFGQYY…RISMPCFVST (101 aa)). Fe cation contacts are provided by H271, D273, and H327. R338 serves as a coordination point for 2-oxoglutarate.

It belongs to the iron/ascorbate-dependent oxidoreductase family. Fe(2+) serves as cofactor. In terms of tissue distribution, expressed in etiolated seedlings, leaves, stems and flowers.

This Arabidopsis thaliana (Mouse-ear cress) protein is 1-aminocyclopropane-1-carboxylate oxidase homolog 5 (2A6).